Reading from the N-terminus, the 68-residue chain is Putative membrane protein insertion efficiency factor (68 aa).

This sequence belongs to the UPF0161 family.

Its subcellular location is the cell membrane. Could be involved in insertion of integral membrane proteins into the membrane. The polypeptide is Putative membrane protein insertion efficiency factor (Syntrophomonas wolfei subsp. wolfei (strain DSM 2245B / Goettingen)).